A 77-amino-acid polypeptide reads, in one-letter code: uncharacterized protein (77 aa).

Residues 1–15 (MNRTSESVEPQQNEK) are compositionally biased toward polar residues. Disordered regions lie at residues 1–20 (MNRT…AVHW) and 31–52 (TYSN…QRTF). Acidic residues predominate over residues 33 to 44 (SNEDDEDNEEGD).

This is an uncharacterized protein from Schizosaccharomyces pombe (strain 972 / ATCC 24843) (Fission yeast).